The chain runs to 527 residues: Putative adhesin P1-like protein MPN_500 (527 aa).

Disordered stretches follow at residues 1–26, 76–148, 248–269, and 468–527; these read MDDITAPQTSAGSSSGTSTNTSGSRS, GWRN…LTNY, ASGSGSNTTSSPGIGFKIPEQS, and FGTD…VSGH. Over residues 9-26 the composition is skewed to low complexity; that stretch reads TSAGSSSGTSTNTSGSRS. The span at 82-95 shows a compositional bias: polar residues; the sequence is TTSGSTGNANDTKF. The segment covering 108 to 117 has biased composition (low complexity); that stretch reads SSGTNTSAGN. Positions 128-148 are enriched in polar residues; sequence QNGQVKTSVQEATSGDNLTNY. The segment covering 248-262 has biased composition (low complexity); it reads ASGSGSNTTSSPGIG. Over residues 468–495 the composition is skewed to polar residues; it reads FGTDHSTQPQPQSLKTTTPVFGRSSGNL. Gly residues predominate over residues 500–513; sequence SGGGAGGGSSGSGQ.

Belongs to the adhesin P1 family.

This Mycoplasma pneumoniae (strain ATCC 29342 / M129 / Subtype 1) (Mycoplasmoides pneumoniae) protein is Putative adhesin P1-like protein MPN_500.